Reading from the N-terminus, the 141-residue chain is uncharacterized protein (141 aa).

This is an uncharacterized protein from Caenorhabditis elegans.